A 355-amino-acid polypeptide reads, in one-letter code: 12-oxophytodienoate reductase-like protein (355 aa).

Residues 30–32 (ALT), A63, and Q105 each bind FMN. Residue 175 to 178 (NASS) coordinates substrate. Y181 (proton donor) is an active-site residue. R265 provides a ligand contact to substrate. FMN-binding positions include G288 and 309–310 (GR).

This sequence belongs to the NADH:flavin oxidoreductase/NADH oxidase family. FMN serves as cofactor. As to expression, weakly expressed in flowers and roots.

The protein resides in the cytoplasm. Functionally, may be involved in the biosynthesis or metabolism of oxylipin signaling molecules. In Solanum lycopersicum (Tomato), this protein is 12-oxophytodienoate reductase-like protein (OPR2).